The following is a 310-amino-acid chain: Ribonuclease HIII (310 aa).

An RNase H type-2 domain is found at 90–306; sequence FQCIGSDEAG…RKKAENLVQK (217 aa). A divalent metal cation is bound by residues D96, E97, and D201.

It belongs to the RNase HII family. RnhC subfamily. Requires Mn(2+) as cofactor. It depends on Mg(2+) as a cofactor.

It localises to the cytoplasm. It catalyses the reaction Endonucleolytic cleavage to 5'-phosphomonoester.. In terms of biological role, endonuclease that specifically degrades the RNA of RNA-DNA hybrids. The polypeptide is Ribonuclease HIII (Staphylococcus saprophyticus subsp. saprophyticus (strain ATCC 15305 / DSM 20229 / NCIMB 8711 / NCTC 7292 / S-41)).